Reading from the N-terminus, the 192-residue chain is Large ribosomal subunit protein bL25 (192 aa).

The protein belongs to the bacterial ribosomal protein bL25 family. CTC subfamily. In terms of assembly, part of the 50S ribosomal subunit; part of the 5S rRNA/L5/L18/L25 subcomplex. Contacts the 5S rRNA. Binds to the 5S rRNA independently of L5 and L18.

Functionally, this is one of the proteins that binds to the 5S RNA in the ribosome where it forms part of the central protuberance. The protein is Large ribosomal subunit protein bL25 of Marinomonas sp. (strain MWYL1).